The primary structure comprises 930 residues: Short transient receptor potential channel 6 (930 aa).

The tract at residues 1–27 (MSQSPRFVTRRGGSLKAAPGAGTRRNE) is disordered. Over 1-437 (MSQSPRFVTR…CSKMGKILRG (437 aa)) the chain is Cytoplasmic. 4 ANK repeats span residues 96–125 (IEEE…SLNV), 131–160 (MGQN…LSRV), 162–188 (DALL…FAEG), and 217–246 (HDVT…RIER). Residues 438-458 (PFMKFVAHAASFTIFLGLLVM) traverse the membrane as a helical segment. The Extracellular portion of the chain corresponds to 459 to 486 (NAADRFEGTKLLPNETSTDNARQLFRMK). A helical membrane pass occupies residues 487 to 507 (TSCFSWMEMLIISWVIGMIWA). Residues 508 to 520 (ECKEIWTQGPKEY) lie on the Cytoplasmic side of the membrane. A helical membrane pass occupies residues 521 to 541 (LFELWNMLDFGMLAIFAASFI). At 542-591 (ARFMAFWHASKAQSIIDANDTLKDLTKVTLGDNVKYYNLARIKWDPTDPQ) the chain is on the extracellular side. N560 carries N-linked (GlcNAc...) asparagine glycosylation. The chain crosses the membrane as a helical span at residues 592-612 (IISEGLYAIAVVLSFSRIAYI). The Cytoplasmic portion of the chain corresponds to 613-635 (LPANESFGPLQISLGRTVKDIFK). A helical membrane pass occupies residues 636-656 (FMVIFIMVFVAFMIGMFNLYS). Topologically, residues 657-705 (YYIGAKQNEAFTTVEESFKTLFWAIFGLSEVKSVVINYNHKFIENIGYV) are extracellular. Residues 706 to 726 (LYGVYNVTMVIVLLNMLIAMI) form a helical membrane-spanning segment. The Cytoplasmic segment spans residues 727–930 (NSSFQEIEDD…LEPKLEESRR (204 aa)). S814 carries the phosphoserine modification.

This sequence belongs to the transient receptor (TC 1.A.4) family. STrpC subfamily. TRPC6 sub-subfamily. Homodimer; forms channel complex. Interacts with MX1 and RNF24. Phosphorylated by FYN, leading to an increase of TRPC6 channel activity. Post-translationally, N-glycosylated. As to expression, lung and brain.

It is found in the cell membrane. It catalyses the reaction Ca(2+)(in) = Ca(2+)(out). Its function is as follows. Forms a receptor-activated non-selective calcium permeant cation channel. Probably is operated by a phosphatidylinositol second messenger system activated by receptor tyrosine kinases or G-protein coupled receptors. Activated by diacylglycerol (DAG) in a membrane-delimited fashion, independently of protein kinase C. Seems not to be activated by intracellular calcium store depletion. The protein is Short transient receptor potential channel 6 of Mus musculus (Mouse).